Consider the following 415-residue polypeptide: Glutamyl-tRNA reductase (415 aa).

Substrate-binding positions include 49-52 (TCNR), Ser104, 109-111 (EPQ), and Gln115. The active-site Nucleophile is Cys50. Residue 184–189 (GAGEMI) coordinates NADP(+).

It belongs to the glutamyl-tRNA reductase family. Homodimer.

The enzyme catalyses (S)-4-amino-5-oxopentanoate + tRNA(Glu) + NADP(+) = L-glutamyl-tRNA(Glu) + NADPH + H(+). Its pathway is porphyrin-containing compound metabolism; protoporphyrin-IX biosynthesis; 5-aminolevulinate from L-glutamyl-tRNA(Glu): step 1/2. In terms of biological role, catalyzes the NADPH-dependent reduction of glutamyl-tRNA(Glu) to glutamate 1-semialdehyde (GSA). This chain is Glutamyl-tRNA reductase, found in Neisseria gonorrhoeae (strain ATCC 700825 / FA 1090).